A 205-amino-acid polypeptide reads, in one-letter code: MAAARPSLGRVLPGSSVLFLCDMQEKFRHNIAYFPQIVSVAARMLKVARLLEVPVMLTEQYPQGLGPTVPELGTEGLRPLAKTCFSMVPALQQELDSRPQLRSVLLCGIEAQACILNTTLDLLDRGLQVHVVVDACSSRSQVDRLVALARMRQSGAFLSTSEGLILQLVGDAVHPQFKEIQKLIKEPAPDSGLLGLFQGQNSLLH.

Residues S7 and S202 each carry the phosphoserine modification.

This sequence belongs to the isochorismatase family. Interacts with CDKN2A.

Its subcellular location is the cytoplasm. The protein resides in the nucleus. The polypeptide is Isochorismatase domain-containing protein 2 (ISOC2) (Homo sapiens (Human)).